Reading from the N-terminus, the 73-residue chain is Large ribosomal subunit protein uL29 (73 aa).

Belongs to the universal ribosomal protein uL29 family.

The polypeptide is Large ribosomal subunit protein uL29 (rpmC) (Synechocystis sp. (strain ATCC 27184 / PCC 6803 / Kazusa)).